The primary structure comprises 953 residues: Kinesin-like protein KIF23 (953 aa).

Residues 7-11 (KTVRK) carry the Nuclear localization signal motif. The Kinesin motor domain occupies 25-436 (PVGVYCRVRP…MRFAEVTQEV (412 aa)). 112 to 119 (GVTGSGKT) is a binding site for ATP. 2 positions are modified to phosphoserine: Ser-155 and Ser-160. A coiled-coil region spans residues 542–618 (QEKLNEREKV…RRLEARLQGM (77 aa)). Residues Lys-572 and Lys-587 each participate in a glycyl lysine isopeptide (Lys-Gly) (interchain with G-Cter in SUMO2) cross-link. Residue Ser-606 is modified to Phosphoserine. Residues Lys-625, Lys-648, Lys-663, and Lys-666 each participate in a glycyl lysine isopeptide (Lys-Gly) (interchain with G-Cter in SUMO2) cross-link. Residues 658–695 (IVTEPKPEKPERPSRERDREKIIPRSVSPSPLPLSSNN) are disordered. The segment covering 662–680 (PKPEKPERPSRERDREKII) has biased composition (basic and acidic residues). Positions 681 to 693 (PRSVSPSPLPLSS) are enriched in low complexity. Ser-683 and Ser-685 each carry phosphoserine. Thr-739 is subject to Phosphothreonine. The residue at position 807 (Ser-807) is a Phosphoserine. Residues Lys-816 and Lys-847 each participate in a glycyl lysine isopeptide (Lys-Gly) (interchain with G-Cter in SUMO2) cross-link. The residue at position 860 (Ser-860) is a Phosphoserine. Residues Lys-867, Lys-870, and Lys-892 each participate in a glycyl lysine isopeptide (Lys-Gly) (interchain with G-Cter in SUMO2) cross-link. Disordered regions lie at residues 894 to 921 (ELPTGSRKRRSSTLAPAQPDGTESEWTD) and 934 to 953 (AGSQLGPGYQHHAQPKRKKP). Phosphoserine is present on Ser-904. Position 920 is a phosphothreonine (Thr-920). Lys-949 participates in a covalent cross-link: Glycyl lysine isopeptide (Lys-Gly) (interchain with G-Cter in SUMO2).

The protein belongs to the TRAFAC class myosin-kinesin ATPase superfamily. Kinesin family. Heterotetramer of two molecules each of RACGAP1 and KIF23. Found in the centralspindlin complex. Interacts with RACGAP1; the interaction is direct. Interacts with ECT2 and PRC1. Interacts with ANXA11 during cytokinesis. Interacts with BIRC6/bruce and USP8/UBPY. Interacts with ARF6, forming heterodimers and heterotetramers. Ubiquitinated. Deubiquitinated by USP8/UBPY. In terms of tissue distribution, detected in testis and ovary from newborn mice (at protein level). Detected in brain, spinal cord and small intestine.

It localises to the nucleus. The protein localises to the cytoplasm. The protein resides in the cytoskeleton. Its subcellular location is the spindle. It is found in the midbody. It localises to the midbody ring. In terms of biological role, component of the centralspindlin complex that serves as a microtubule-dependent and Rho-mediated signaling required for the myosin contractile ring formation during the cell cycle cytokinesis. Essential for cytokinesis in Rho-mediated signaling. Required for the localization of ECT2 to the central spindle. Plus-end-directed motor enzyme that moves antiparallel microtubules in vitro. The chain is Kinesin-like protein KIF23 (Kif23) from Mus musculus (Mouse).